We begin with the raw amino-acid sequence, 555 residues long: MSKPETPAAANFLRPIVQADLESGKHAKIVTRFPPEPNGYLHIGHAKSICLNFGLAQEFGGECNLRFDDTNPAKEDQEYIDAIKSDVRWLGFQWAGEERYASSYFDQLYDWAIHLIEAGKAYVCDLSPDEAREYRGSLTEPGRNSPYRERSVEENLDLFARMRAGEFPDGARALRAKIDMAAPNMNLRDPILYRIRHAHHHQTGDKWCIYPSYDFTHGQSDAIEGITHSICTLEFEDHRPLYEWFLDNLPVPCRPRQYEFARLNLNYTITSKRKLKQLVDEGHVGGWDDPRMSTLSGYRRRGYTPASIRAFCDMIGVNRAGGVVDIGMLEFAIREDLDANAARAMCVLKPLKVVITNYPQGRVESLELPRHPKQDMGVRVLPFSREIYIDAGDFEETPPAGYKRLIPGGEVRLRGSYVIRADEAIKDEAGNIVELRCSYDENTLGKNPEGRKVKGVIHWVPLEGSIKCEVRLYDRLFKVANPEKSEEGGSFLDNINSGSLVVLTGCRAEPSLANARPEERFQFEREGYFCADLKDSRPGAPVFNRTVTLRDSWGQ.

A 'HIGH' region motif is present at residues 35 to 45 (PEPNGYLHIGH). ATP-binding positions include 36–38 (EPN) and 42–48 (HIGHAKS). L-glutamine contacts are provided by aspartate 68 and tyrosine 213. ATP is bound by residues threonine 232 and 262 to 263 (RL). A 'KMSKS' region motif is present at residues 269 to 273 (ITSKR).

The protein belongs to the class-I aminoacyl-tRNA synthetase family. Monomer.

It localises to the cytoplasm. It catalyses the reaction tRNA(Gln) + L-glutamine + ATP = L-glutaminyl-tRNA(Gln) + AMP + diphosphate. In Azotobacter vinelandii (strain DJ / ATCC BAA-1303), this protein is Glutamine--tRNA ligase.